We begin with the raw amino-acid sequence, 147 residues long: T-DNA border endonuclease VirD1 (147 aa).

In terms of biological role, tumor formation by A.tumefaciens involves the transfer and integration of a defined segment (T-DNA) of Ti plasmid DNA into the plant nuclear genome. The virD operon encodes a site-specific endonuclease that cleaves at a unique site within both 24 bp direct repeats flanking the T-DNA. The sequence is that of T-DNA border endonuclease VirD1 (virD1) from Rhizobium radiobacter (Agrobacterium tumefaciens).